The primary structure comprises 209 residues: Cerebral peptide 1 (209 aa).

The N-terminal stretch at 1 to 20 is a signal peptide; the sequence is MLLAKISVVVLLLAIDGTSS. The segment covering 21-39 has biased composition (polar residues); sequence SESTDNVVLSSSPDSQKAA. Residues 21–43 constitute a propeptide, connecting peptide 1; sequence SESTDNVVLSSSPDSQKAATSRH. The segment at 21-56 is disordered; the sequence is SESTDNVVLSSSPDSQKAATSRHKRAPGWGKRSSLN. Tryptophan amide is present on Trp-49. A propeptide spans 53 to 77 (connecting peptide 2); sequence SSLNDEDLFADSDSAQELLDSVAAL. A tryptophan amide mark is found at Trp-83 and Trp-105. Residues 98-169 are disordered; that stretch reads EAKRAPGWGK…APGWGKRSGG (72 aa). Residues 109 to 122 constitute a propeptide, connecting peptide 4; the sequence is GQEIDVDEDGSEQE. Residues Trp-128, Trp-135, Trp-142, Trp-149, Trp-156, and Trp-163 each carry the tryptophan amide modification. A propeptide spans 167–191 (connecting peptide 5); sequence SGGDYCETLEKMVDAYIYKAVEVDS. Cys-172 and Cys-197 form a disulfide bridge.

Homodimer; disulfide-linked. In terms of tissue distribution, cerebral peptide 1 is expressed in the cerebral, pedal and buccal ganglia and B1 and B2 neurons. APGW-amide is expressed in buccal ganglia and several neurons.

It is found in the secreted. Functionally, may function as a peptide transmitter. The polypeptide is Cerebral peptide 1 (Aplysia californica (California sea hare)).